Here is a 353-residue protein sequence, read N- to C-terminus: Photosystem II D2 protein (353 aa).

Threonine 2 is subject to N-acetylthreonine. Position 2 is a phosphothreonine (threonine 2). Residues 41-61 (CAYFALGGWFTGTTFVTSWYT) traverse the membrane as a helical segment. Histidine 118 provides a ligand contact to chlorophyll a. Residues 125–141 (GFMLRQFELARSVQLRP) traverse the membrane as a helical segment. Glutamine 130 and asparagine 143 together coordinate pheophytin a. A helical membrane pass occupies residues 153-166 (VFVSVFLIYPLGQS). Histidine 198 serves as a coordination point for chlorophyll a. A helical transmembrane segment spans residues 208-228 (AALLCAIHGATVENTLFEDGD). The a plastoquinone site is built by histidine 215 and phenylalanine 262. A Fe cation-binding site is contributed by histidine 215. Histidine 269 provides a ligand contact to Fe cation. The chain crosses the membrane as a helical span at residues 279-295 (GLWMSAIGVVGLALNLR).

Belongs to the reaction center PufL/M/PsbA/D family. In terms of assembly, PSII is composed of 1 copy each of membrane proteins PsbA, PsbB, PsbC, PsbD, PsbE, PsbF, PsbH, PsbI, PsbJ, PsbK, PsbL, PsbM, PsbT, PsbX, PsbY, PsbZ, Psb30/Ycf12, at least 3 peripheral proteins of the oxygen-evolving complex and a large number of cofactors. It forms dimeric complexes. The D1/D2 heterodimer binds P680, chlorophylls that are the primary electron donor of PSII, and subsequent electron acceptors. It shares a non-heme iron and each subunit binds pheophytin, quinone, additional chlorophylls, carotenoids and lipids. There is also a Cl(-1) ion associated with D1 and D2, which is required for oxygen evolution. The PSII complex binds additional chlorophylls, carotenoids and specific lipids. is required as a cofactor.

It localises to the plastid. Its subcellular location is the chloroplast thylakoid membrane. The enzyme catalyses 2 a plastoquinone + 4 hnu + 2 H2O = 2 a plastoquinol + O2. Photosystem II (PSII) is a light-driven water:plastoquinone oxidoreductase that uses light energy to abstract electrons from H(2)O, generating O(2) and a proton gradient subsequently used for ATP formation. It consists of a core antenna complex that captures photons, and an electron transfer chain that converts photonic excitation into a charge separation. The D1/D2 (PsbA/PsbD) reaction center heterodimer binds P680, the primary electron donor of PSII as well as several subsequent electron acceptors. D2 is needed for assembly of a stable PSII complex. The polypeptide is Photosystem II D2 protein (Cryptomeria japonica (Japanese cedar)).